We begin with the raw amino-acid sequence, 468 residues long: ATP synthase subunit beta 1 (468 aa).

Glycine 151–threonine 158 serves as a coordination point for ATP.

The protein belongs to the ATPase alpha/beta chains family. F-type ATPases have 2 components, CF(1) - the catalytic core - and CF(0) - the membrane proton channel. CF(1) has five subunits: alpha(3), beta(3), gamma(1), delta(1), epsilon(1). CF(0) has three main subunits: a(1), b(2) and c(9-12). The alpha and beta chains form an alternating ring which encloses part of the gamma chain. CF(1) is attached to CF(0) by a central stalk formed by the gamma and epsilon chains, while a peripheral stalk is formed by the delta and b chains.

The protein localises to the cell inner membrane. It carries out the reaction ATP + H2O + 4 H(+)(in) = ADP + phosphate + 5 H(+)(out). Its function is as follows. Produces ATP from ADP in the presence of a proton gradient across the membrane. The catalytic sites are hosted primarily by the beta subunits. This is ATP synthase subunit beta 1 from Photobacterium profundum (strain SS9).